A 134-amino-acid chain; its full sequence is Large ribosomal subunit protein eL32 (134 aa).

The protein belongs to the eukaryotic ribosomal protein eL32 family.

The protein is Large ribosomal subunit protein eL32 (RpL32) of Spodoptera frugiperda (Fall armyworm).